Here is a 107-residue protein sequence, read N- to C-terminus: Large ribosomal subunit protein uL24 (107 aa).

This sequence belongs to the universal ribosomal protein uL24 family. As to quaternary structure, part of the 50S ribosomal subunit.

In terms of biological role, one of two assembly initiator proteins, it binds directly to the 5'-end of the 23S rRNA, where it nucleates assembly of the 50S subunit. One of the proteins that surrounds the polypeptide exit tunnel on the outside of the subunit. In Carboxydothermus hydrogenoformans (strain ATCC BAA-161 / DSM 6008 / Z-2901), this protein is Large ribosomal subunit protein uL24.